A 109-amino-acid polypeptide reads, in one-letter code: Flagellar hook-basal body complex protein FliE 2 (109 aa).

Belongs to the FliE family.

It is found in the bacterial flagellum basal body. The chain is Flagellar hook-basal body complex protein FliE 2 (fliE2) from Bradyrhizobium diazoefficiens (strain JCM 10833 / BCRC 13528 / IAM 13628 / NBRC 14792 / USDA 110).